The primary structure comprises 149 residues: FAD synthase (149 aa).

Residues valine 9–phenylalanine 10, histidine 14–histidine 17, aspartate 93, and tyrosine 120 each bind ATP.

The protein belongs to the archaeal FAD synthase family. As to quaternary structure, homodimer. A divalent metal cation is required as a cofactor.

The catalysed reaction is FMN + ATP + H(+) = FAD + diphosphate. It functions in the pathway cofactor biosynthesis; FAD biosynthesis; FAD from FMN: step 1/1. Catalyzes the transfer of the AMP portion of ATP to flavin mononucleotide (FMN) to produce flavin adenine dinucleotide (FAD) coenzyme. The chain is FAD synthase from Aciduliprofundum boonei (strain DSM 19572 / T469).